A 349-amino-acid chain; its full sequence is Protein-glutamate methylesterase/protein-glutamine glutaminase (349 aa).

A Response regulatory domain is found at 5 to 122 (RVLSVDDSAL…REGMLAYNEM (118 aa)). D56 bears the 4-aspartylphosphate mark. A CheB-type methylesterase domain is found at 152-344 (LLSSEKLIAI…QQMLAKISAG (193 aa)). Catalysis depends on residues S164, H190, and D286.

This sequence belongs to the CheB family. Interacts with CheA. Binds to a C-terminal pentapeptide sequence carried by certain receptors. Post-translationally, phosphorylated by CheA. Phosphorylation of the N-terminal regulatory domain activates the methylesterase activity.

It is found in the cytoplasm. It carries out the reaction [protein]-L-glutamate 5-O-methyl ester + H2O = L-glutamyl-[protein] + methanol + H(+). It catalyses the reaction L-glutaminyl-[protein] + H2O = L-glutamyl-[protein] + NH4(+). Methylesterase activity is activated via phosphorylation in response to negative chemotactic stimuli and is inhibited in the presence of attractants. Activation requires both CheA and CheW. Involved in chemotaxis. Part of a chemotaxis signal transduction system that modulates chemotaxis in response to various stimuli. Catalyzes the demethylation of specific methylglutamate residues introduced into the chemoreceptors (methyl-accepting chemotaxis proteins or MCP) by CheR. Also mediates the irreversible deamidation of specific glutamine residues to glutamic acid. Catalyzes its own deactivation by removing the activating phosphoryl group. The polypeptide is Protein-glutamate methylesterase/protein-glutamine glutaminase (Escherichia coli (strain K12)).